Here is a 200-residue protein sequence, read N- to C-terminus: RNA-binding protein with multiple splicing 2 (200 aa).

Residues 22–99 (RTLFVSGLPV…QTLRLEFAKA (78 aa)) form the RRM domain. An important for homodimerization region spans residues 32–42 (DIKPRELYLLF).

Homodimer. Expressed in developing heart.

Its subcellular location is the cytoplasm. It localises to the nucleus. It is found in the stress granule. In terms of biological role, RNA-binding protein involved in the regulation of smooth muscle cell differentiation and proliferation in the gastrointestinal system. Binds NOG mRNA, the major inhibitor of the bone morphogenetic protein (BMP) pathway. Mediates an increase of NOG mRNA levels, thereby contributing to the negative regulation of BMP signaling pathway and promoting reversible dedifferentiation and proliferation of smooth muscle cells. Acts as a pre-mRNA alternative splicing regulator. Mediates ACTN1 and FLNB alternative splicing. Likely binds to mRNA tandem CAC trinucleotide or CA dinucleotide motifs. The chain is RNA-binding protein with multiple splicing 2 from Gallus gallus (Chicken).